The sequence spans 159 residues: Endoribonuclease YbeY (159 aa).

Residues His-114, His-118, and His-124 each coordinate Zn(2+).

It belongs to the endoribonuclease YbeY family. Zn(2+) is required as a cofactor.

The protein resides in the cytoplasm. Single strand-specific metallo-endoribonuclease involved in late-stage 70S ribosome quality control and in maturation of the 3' terminus of the 16S rRNA. The sequence is that of Endoribonuclease YbeY from Pectobacterium atrosepticum (strain SCRI 1043 / ATCC BAA-672) (Erwinia carotovora subsp. atroseptica).